Here is a 335-residue protein sequence, read N- to C-terminus: Glyceraldehyde-3-phosphate dehydrogenase 1 (335 aa).

Residues 13 to 14 (TI) and glycine 111 each bind NAD(+). A D-glyceraldehyde 3-phosphate-binding site is contributed by 140–142 (SCN). Cysteine 141 serves as the catalytic Nucleophile. Residue arginine 169 coordinates NAD(+). Residues threonine 171 and 195–196 (HG) contribute to the D-glyceraldehyde 3-phosphate site. Position 300 (glutamine 300) interacts with NAD(+).

It belongs to the glyceraldehyde-3-phosphate dehydrogenase family. As to quaternary structure, homotetramer.

The protein resides in the cytoplasm. The enzyme catalyses D-glyceraldehyde 3-phosphate + phosphate + NADP(+) = (2R)-3-phospho-glyceroyl phosphate + NADPH + H(+). It catalyses the reaction D-glyceraldehyde 3-phosphate + phosphate + NAD(+) = (2R)-3-phospho-glyceroyl phosphate + NADH + H(+). It functions in the pathway carbohydrate degradation; glycolysis; pyruvate from D-glyceraldehyde 3-phosphate: step 1/5. This is Glyceraldehyde-3-phosphate dehydrogenase 1 (gapA) from Methanosarcina acetivorans (strain ATCC 35395 / DSM 2834 / JCM 12185 / C2A).